The sequence spans 151 residues: 6,7-dimethyl-8-ribityllumazine synthase (151 aa).

5-amino-6-(D-ribitylamino)uracil is bound by residues Phe23, 55-57 (AYE), and 79-81 (AVI). 84-85 (AT) is a binding site for (2S)-2-hydroxy-3-oxobutyl phosphate. The Proton donor role is filled by His87. A 5-amino-6-(D-ribitylamino)uracil-binding site is contributed by Phe111. Arg125 contacts (2S)-2-hydroxy-3-oxobutyl phosphate.

The protein belongs to the DMRL synthase family.

It carries out the reaction (2S)-2-hydroxy-3-oxobutyl phosphate + 5-amino-6-(D-ribitylamino)uracil = 6,7-dimethyl-8-(1-D-ribityl)lumazine + phosphate + 2 H2O + H(+). It participates in cofactor biosynthesis; riboflavin biosynthesis; riboflavin from 2-hydroxy-3-oxobutyl phosphate and 5-amino-6-(D-ribitylamino)uracil: step 1/2. In terms of biological role, catalyzes the formation of 6,7-dimethyl-8-ribityllumazine by condensation of 5-amino-6-(D-ribitylamino)uracil with 3,4-dihydroxy-2-butanone 4-phosphate. This is the penultimate step in the biosynthesis of riboflavin. In Leptospira interrogans serogroup Icterohaemorrhagiae serovar Lai (strain 56601), this protein is 6,7-dimethyl-8-ribityllumazine synthase.